Here is a 421-residue protein sequence, read N- to C-terminus: UV-B-induced protein At3g17800, chloroplastic (421 aa).

Disordered stretches follow at residues 1 to 40 and 74 to 95; these read MDAL…RSGS and VRAS…IAPL. The N-terminal 75 residues, 1-75, are a transit peptide targeting the chloroplast; sequence MDALTSSLVR…AKTRRSFVVR (75 aa). Residues 16 to 28 are compositionally biased toward polar residues; the sequence is SRTSDNGSGSMFL. The segment covering 74 to 88 has biased composition (low complexity); the sequence is VRASSASNDASSGSS.

Its subcellular location is the plastid. The protein localises to the chloroplast. This chain is UV-B-induced protein At3g17800, chloroplastic, found in Arabidopsis thaliana (Mouse-ear cress).